A 432-amino-acid polypeptide reads, in one-letter code: ATP-dependent RNA helicase RhlB (432 aa).

The Q motif motif lies at 9–37 (QNFADLGLQPQVIDGLNAKGFIKCTPIQA). The region spanning 40–219 (LPVLLAGQDI…FEHMQEPEHV (180 aa)) is the Helicase ATP-binding domain. 53 to 60 (AQTGTGKT) lines the ATP pocket. Positions 165–168 (DEAD) match the DEAD box motif. The Helicase C-terminal domain occupies 245–390 (ALLQTLIEEE…QSDYDASALL (146 aa)). The tract at residues 397–432 (LRLQRRPQQNRRNNNGQRQGGNRKHSRPRQPRNTQS) is disordered. Residues 417–426 (GNRKHSRPRQ) show a composition bias toward basic residues.

This sequence belongs to the DEAD box helicase family. RhlB subfamily. Component of the RNA degradosome, which is a multiprotein complex involved in RNA processing and mRNA degradation.

Its subcellular location is the cytoplasm. The catalysed reaction is ATP + H2O = ADP + phosphate + H(+). Its function is as follows. DEAD-box RNA helicase involved in RNA degradation. Has RNA-dependent ATPase activity and unwinds double-stranded RNA. The chain is ATP-dependent RNA helicase RhlB from Aliivibrio fischeri (strain MJ11) (Vibrio fischeri).